The following is a 231-amino-acid chain: MFDIGFSELLLFGVIALIVLGPEKLPQAARTAGQWYAKIRRTVSTLQSEIEAELDLAETRQQMQKELAKIRQTEAEMRREMAEMRGSMQEFESSKNQHLKASRDLVDDAKPRQSSQGSSENDDNRPVSPKSFDYAYDNNRQAEKPESSEQPSAQGDNDSLKTDFNDNANPVIQTITTRPWENMWFRLGAYDKARRLPQPPYLPNYKADILLNSHIDSLLPKQASVNEQESH.

A helical transmembrane segment spans residues 1 to 21; that stretch reads MFDIGFSELLLFGVIALIVLG. The disordered stretch occupies residues 77 to 168; sequence MRREMAEMRG…SLKTDFNDNA (92 aa). The span at 101-111 shows a compositional bias: basic and acidic residues; that stretch reads ASRDLVDDAKP. Over residues 148–157 the composition is skewed to polar residues; the sequence is SEQPSAQGDN.

The protein belongs to the TatB family. The Tat system comprises two distinct complexes: a TatABC complex, containing multiple copies of TatA, TatB and TatC subunits, and a separate TatA complex, containing only TatA subunits. Substrates initially bind to the TatABC complex, which probably triggers association of the separate TatA complex to form the active translocon.

It is found in the cell inner membrane. In terms of biological role, part of the twin-arginine translocation (Tat) system that transports large folded proteins containing a characteristic twin-arginine motif in their signal peptide across membranes. Together with TatC, TatB is part of a receptor directly interacting with Tat signal peptides. TatB may form an oligomeric binding site that transiently accommodates folded Tat precursor proteins before their translocation. The chain is Sec-independent protein translocase protein TatB from Psychrobacter cryohalolentis (strain ATCC BAA-1226 / DSM 17306 / VKM B-2378 / K5).